The sequence spans 342 residues: Delta(6)-protoilludene synthase 8 (342 aa).

Residue aspartate 81 participates in Mg(2+) binding. The DDXXD motif motif lies at 93 to 97 (RDMVD). Residues asparagine 217, serine 221, and glutamate 225 each contribute to the Mg(2+) site. An NSE/DTE motif motif is present at residues 217–225 (NDLVSYNRE). Arginine 305 and tyrosine 306 together coordinate (2E,6E)-farnesyl diphosphate.

Belongs to the terpene synthase family. The cofactor is Mg(2+).

It carries out the reaction (2E,6E)-farnesyl diphosphate = Delta(6)-protoilludene + diphosphate. Terpene cyclase that catalyzes the cyclization of farnesyl diphosphate (FPP) to delta(6)-protoilludene. This chain is Delta(6)-protoilludene synthase 8, found in Postia placenta (strain ATCC 44394 / Madison 698-R) (Brown rot fungus).